Reading from the N-terminus, the 268-residue chain is Bidirectional sugar transporter N3 (268 aa).

Topologically, residues 1–7 (MAISHNT) are extracellular. Residues 8-28 (LAFTFGMLGNVISFLVFLAPI) traverse the membrane as a helical segment. The MtN3/slv 1 domain occupies 10-96 (FTFGMLGNVI…ILYIIYAPRD (87 aa)). Over 29–42 (STFYRIYKKKSTEG) the chain is Cytoplasmic. Residues 43-63 (FQSLPYLVALFSSMLWLYYAL) form a helical membrane-spanning segment. The Extracellular portion of the chain corresponds to 64–70 (LKKDAFL). A helical membrane pass occupies residues 71 to 91 (LITINSFGCVVETIYIILYII). At 92-103 (YAPRDARNLTFK) the chain is on the cytoplasmic side. A helical transmembrane segment spans residues 104–124 (LLSAMNVGSFALILIVTNYAV). At 125–131 (HGPLRVQ) the chain is on the extracellular side. Residues 131–214 (QVLGWVCVSL…QMLLYAIYRN (84 aa)) enclose the MtN3/slv 2 domain. A helical membrane pass occupies residues 132–152 (VLGWVCVSLSVSVFAAPLSIV). Residues 153–165 (AQVVRTKSVEFMP) are Cytoplasmic-facing. The helical transmembrane segment at 166–186 (FNLSFTLTLSATMWFGYGFFL) threads the bilayer. The Extracellular portion of the chain corresponds to 187-190 (KDIC). The chain crosses the membrane as a helical span at residues 191 to 211 (IXLPNVLGXVLGLLQMLLYAI). Topologically, residues 212 to 268 (YRNGGEKAMKKEKKAPIEPPKSIVIETQLEKIEQEKKNKDDDNEEKDKSEEPIGCGV) are cytoplasmic. Positions 234 to 262 (IVIETQLEKIEQEKKNKDDDNEEKDKSEE) form a coiled coil. Positions 243–262 (IEQEKKNKDDDNEEKDKSEE) are enriched in basic and acidic residues. The interval 243-268 (IEQEKKNKDDDNEEKDKSEEPIGCGV) is disordered.

It belongs to the SWEET sugar transporter family. Forms homooligomers and/or heterooligomers.

The protein localises to the cell membrane. Its function is as follows. Mediates both low-affinity uptake and efflux of sugar across the plasma membrane. This is Bidirectional sugar transporter N3 (N3) from Medicago truncatula (Barrel medic).